The sequence spans 99 residues: Aspartyl/glutamyl-tRNA(Asn/Gln) amidotransferase subunit C (99 aa).

Belongs to the GatC family. Heterotrimer of A, B and C subunits.

The catalysed reaction is L-glutamyl-tRNA(Gln) + L-glutamine + ATP + H2O = L-glutaminyl-tRNA(Gln) + L-glutamate + ADP + phosphate + H(+). It catalyses the reaction L-aspartyl-tRNA(Asn) + L-glutamine + ATP + H2O = L-asparaginyl-tRNA(Asn) + L-glutamate + ADP + phosphate + 2 H(+). In terms of biological role, allows the formation of correctly charged Asn-tRNA(Asn) or Gln-tRNA(Gln) through the transamidation of misacylated Asp-tRNA(Asn) or Glu-tRNA(Gln) in organisms which lack either or both of asparaginyl-tRNA or glutaminyl-tRNA synthetases. The reaction takes place in the presence of glutamine and ATP through an activated phospho-Asp-tRNA(Asn) or phospho-Glu-tRNA(Gln). This is Aspartyl/glutamyl-tRNA(Asn/Gln) amidotransferase subunit C from Burkholderia vietnamiensis (strain G4 / LMG 22486) (Burkholderia cepacia (strain R1808)).